The chain runs to 147 residues: Lysozyme C-1 (147 aa).

The N-terminal stretch at 1 to 18 (MKALIILGFLFLSVAVQG) is a signal peptide. One can recognise a C-type lysozyme domain in the interval 19-147 (KVFERCELAR…VSSYVEGCTL (129 aa)). Disulfide bonds link Cys-24–Cys-145, Cys-48–Cys-133, Cys-83–Cys-99, and Cys-95–Cys-113. Catalysis depends on residues Glu-53 and Asp-71.

The protein belongs to the glycosyl hydrolase 22 family. In terms of assembly, monomer. Stomach-specific.

The catalysed reaction is Hydrolysis of (1-&gt;4)-beta-linkages between N-acetylmuramic acid and N-acetyl-D-glucosamine residues in a peptidoglycan and between N-acetyl-D-glucosamine residues in chitodextrins.. Lysozymes have primarily a bacteriolytic function; those in tissues and body fluids are associated with the monocyte-macrophage system and enhance the activity of immunoagents. This Bos taurus (Bovine) protein is Lysozyme C-1 (LYZ1).